A 316-amino-acid chain; its full sequence is MKVLWVAVVVALLAGCQADMEGELGPEEPLTTQQPRGKDSQPWEQALGRFWDYLRWVQTLSDQVQEELLNTQVIQELTALMEETMKEVKAYKEELEGQLGPMAQETQARVSKELQAAQARLGSDMEDLRNRLAQYRSEVQAMLGQSTEELRARMASHLRKLRKRLLRDADDLKKRLAVYQAGASEGAERSLSAVRERFGPLVEQGQSRAATLSTLAGQPLLERAEAWRQKLHGRLEEVGVRAQDRLDKIRQQLEEVHAKVEEQGNQMRLQAEAFQARLRSWFEPLVEDMQRQWAGLVEKVQLALRPSPTSPPSENH.

Positions 1–18 (MKVLWVAVVVALLAGCQA) are cleaved as a signal peptide. 8 repeat units span residues 79–100 (ALME…GQLG), 101–122 (PMAQ…ARLG), 123–144 (SDME…AMLG), 145–166 (QSTE…KRLL), 167–188 (RDAD…EGAE), 189–210 (RSLS…SRAA), 211–232 (TLST…QKLH), and 233–254 (GRLE…QQLE). The tract at residues 79–254 (ALMEETMKEV…RLDKIRQQLE (176 aa)) is 8 X 22 AA approximate tandem repeats. M142 carries the methionine sulfoxide modification. S146 carries the post-translational modification Phosphoserine; by FAM20C. Positions 157 to 167 (HLRKLRKRLLR) are LDL and other lipoprotein receptors binding. Residue 161–164 (LRKR) coordinates heparin. A lipid-binding and lipoprotein association region spans residues 209–289 (AATLSTLAGQ…SWFEPLVEDM (81 aa)). T211 carries an O-linked (GalNAc...) threonine glycan. 228–235 (RQKLHGRL) is a binding site for heparin. Residues 265 to 316 (NQMRLQAEAFQARLRSWFEPLVEDMQRQWAGLVEKVQLALRPSPTSPPSENH) are homooligomerization. The specificity for association with VLDL stretch occupies residues 277-289 (RLRSWFEPLVEDM).

It belongs to the apolipoprotein A1/A4/E family. As to quaternary structure, homotetramer. May interact with ABCA1; functionally associated with ABCA1 in the biogenesis of HDLs. May interact with APP/A4 amyloid-beta peptide; the interaction is extremely stable in vitro but its physiological significance is unclear. May interact with MAPT. May interact with MAP2. In the cerebrospinal fluid, interacts with secreted SORL1. Interacts with PMEL; this allows the loading of PMEL luminal fragment on ILVs to induce fibril nucleation. Post-translationally, APOE exists as multiple glycosylated and sialylated glycoforms within cells and in plasma. The extent of glycosylation and sialylation are tissue and context specific. In terms of processing, glycated in plasma VLDL. Phosphorylated by FAM20C in the extracellular medium.

The protein resides in the secreted. Its subcellular location is the extracellular space. It localises to the extracellular matrix. The protein localises to the extracellular vesicle. It is found in the endosome. The protein resides in the multivesicular body. Its function is as follows. APOE is an apolipoprotein, a protein associating with lipid particles, that mainly functions in lipoprotein-mediated lipid transport between organs via the plasma and interstitial fluids. APOE is a core component of plasma lipoproteins and is involved in their production, conversion and clearance. Apolipoproteins are amphipathic molecules that interact both with lipids of the lipoprotein particle core and the aqueous environment of the plasma. As such, APOE associates with chylomicrons, chylomicron remnants, very low density lipoproteins (VLDL) and intermediate density lipoproteins (IDL) but shows a preferential binding to high-density lipoproteins (HDL). It also binds a wide range of cellular receptors including the LDL receptor/LDLR and the very low-density lipoprotein receptor/VLDLR that mediate the cellular uptake of the APOE-containing lipoprotein particles. Finally, APOE also has a heparin-binding activity and binds heparan-sulfate proteoglycans on the surface of cells, a property that supports the capture and the receptor-mediated uptake of APOE-containing lipoproteins by cells. The polypeptide is Apolipoprotein E (APOE) (Bos mutus grunniens (Wild yak)).